Here is a 209-residue protein sequence, read N- to C-terminus: Uracil phosphoribosyltransferase (209 aa).

5-phospho-alpha-D-ribose 1-diphosphate-binding positions include Arg79, Arg104, and 131–139 (DPMLATGGS). Uracil-binding positions include Ile194 and 199–201 (GDA). Residue Asp200 coordinates 5-phospho-alpha-D-ribose 1-diphosphate.

The protein belongs to the UPRTase family. The cofactor is Mg(2+).

The catalysed reaction is UMP + diphosphate = 5-phospho-alpha-D-ribose 1-diphosphate + uracil. It functions in the pathway pyrimidine metabolism; UMP biosynthesis via salvage pathway; UMP from uracil: step 1/1. Its activity is regulated as follows. Allosterically activated by GTP. Catalyzes the conversion of uracil and 5-phospho-alpha-D-ribose 1-diphosphate (PRPP) to UMP and diphosphate. The sequence is that of Uracil phosphoribosyltransferase from Shouchella clausii (strain KSM-K16) (Alkalihalobacillus clausii).